The sequence spans 254 residues: MAEATNQVAVANGHENEDNNDHLIQSSDPQHPANLIPEMCRKFYTWGWVTGTGGGTSIRHGDHIFIAPSGVQKELIQPENMFVMQFPTPKYPPSERKYIRKPKNLKPSDCTPLFLTAFERGAGCCIHTHSQWAVLVTLLVEREYGKEGYFEISNIEQIKGIPKGKGKGMHNYHDTLRIPIIENTPFEEDLTEGLERAINANPDTYAVLVRRHGIYVWGDTPAKAKTQCESLDWLFQLAVEMHKLGLPWDINKTK.

Cys-110 is a binding site for substrate. His-127 and His-129 together coordinate Zn(2+). Glu-156 acts as the Proton donor/acceptor in catalysis. His-212 serves as a coordination point for Zn(2+).

This sequence belongs to the aldolase class II family. MtnB subfamily. It depends on Zn(2+) as a cofactor.

Its subcellular location is the cytoplasm. It catalyses the reaction 5-(methylsulfanyl)-D-ribulose 1-phosphate = 5-methylsulfanyl-2,3-dioxopentyl phosphate + H2O. It functions in the pathway amino-acid biosynthesis; L-methionine biosynthesis via salvage pathway; L-methionine from S-methyl-5-thio-alpha-D-ribose 1-phosphate: step 2/6. In terms of biological role, catalyzes the dehydration of methylthioribulose-1-phosphate (MTRu-1-P) into 2,3-diketo-5-methylthiopentyl-1-phosphate (DK-MTP-1-P). In Talaromyces marneffei (strain ATCC 18224 / CBS 334.59 / QM 7333) (Penicillium marneffei), this protein is Methylthioribulose-1-phosphate dehydratase.